A 270-amino-acid polypeptide reads, in one-letter code: Tetraspanin-18 (270 aa).

Residues 1 to 15 (MRRNCCHVSFASTLK) are Cytoplasmic-facing. Residues 16–36 (ILNFVQAFIGVSIIIYSIWML) form a helical membrane-spanning segment. Residues 37-99 (HEYSRHLPVD…LRSLDLPAPW (63 aa)) are Extracellular-facing. A helical transmembrane segment spans residues 100-120 (FIYSFMAVGILVCIVTFIGFI). The Cytoplasmic portion of the chain corresponds to 121–132 (AAEAINGCCLCF). A helical transmembrane segment spans residues 133 to 153 (YSILKTLLILLEAALVAYIAI). At 154–183 (DRHWEKDLPYDPTGELSSLRAFIEENIDIC) the chain is on the extracellular side. A helical transmembrane segment spans residues 184–204 (KWVGIAVVAVQLLSLLLAMVL). Topologically, residues 205–270 (RAMVSTPKPE…NQSPPVNPKG (66 aa)) are cytoplasmic. The segment at 212 to 249 (KPELDEEEDDENPRSRTWDPLLGPQGNQAPAGSSKIEN) is disordered. The span at 236–249 (QGNQAPAGSSKIEN) shows a compositional bias: polar residues. The residue at position 245 (Ser-245) is a Phosphoserine.

Belongs to the tetraspanin (TM4SF) family. Homodimer. Constituent of tobamovirus replication complex. As to expression, expressed in rosette leaves.

The protein resides in the membrane. The protein localises to the vacuole membrane. May be involved in the regulation of cell differentiation. Its function is as follows. Promotes intracellular multiplication of tobamoviruses, probably being a component of the replication complex. The protein is Tetraspanin-18 (TOM2AH2) of Arabidopsis thaliana (Mouse-ear cress).